The primary structure comprises 455 residues: UDP-N-acetylmuramoylalanine--D-glutamate ligase (455 aa).

117 to 123 (GTNGKTT) provides a ligand contact to ATP.

It belongs to the MurCDEF family.

It localises to the cytoplasm. It carries out the reaction UDP-N-acetyl-alpha-D-muramoyl-L-alanine + D-glutamate + ATP = UDP-N-acetyl-alpha-D-muramoyl-L-alanyl-D-glutamate + ADP + phosphate + H(+). The protein operates within cell wall biogenesis; peptidoglycan biosynthesis. In terms of biological role, cell wall formation. Catalyzes the addition of glutamate to the nucleotide precursor UDP-N-acetylmuramoyl-L-alanine (UMA). The protein is UDP-N-acetylmuramoylalanine--D-glutamate ligase of Pelotomaculum thermopropionicum (strain DSM 13744 / JCM 10971 / SI).